The primary structure comprises 495 residues: Fusicoccadiene 8-ol C-16 hydroxylase (495 aa).

A helical transmembrane segment spans residues 12-32; the sequence is VLLALIVWIGTTIIYNIYFHP. 2 N-linked (GlcNAc...) asparagine glycosylation sites follow: asparagine 249 and asparagine 317. Cysteine 439 is a heme binding site.

Belongs to the cytochrome P450 family. It depends on heme as a cofactor.

The protein localises to the membrane. It participates in mycotoxin biosynthesis. In terms of biological role, cytochrome P450 monooxygenase; part of the gene cluster that mediates the biosynthesis of the diterpene glucoside brassicicene C. In the first step of the brassicicene C biosynthesis, the bifunctional diterpene synthase bsc8 that possesses both prenyl transferase and terpene cyclase activity, converts isopentenyl diphosphate and dimethylallyl diphosphate into geranylgeranyl diphosphate (GGDP) that is further converted into fusicocca-2,10(14)-diene, the first precursor for brassicicene C. Fusicocca-2,10(14)-diene is then substrate of cytochrome P450 monooxygenase bsc1 for hydroxylation at the C-8 position. Oxidation at C-16 position to aldehyde is then catalyzed by the cytochrome P450 monooyxygenase bsc7, yielding fusicocca-2,10(14)-diene-8-beta,16-diol. Follows the isomerization of the double bond and reduction of aldehyde to alcohol catalyzed by the short-chain dehydrogenase/reductase bsc3 to yield the diol compound fusicocca-1,10(14)-diene-8 beta,16-diol. The next step is the oxidation at the C-3 position of fusicocca-2,10(14)-diene-8-beta,16-diol catalyzed by the alpha-ketoglutarate dependent dioxygenase bsc9, to produce a triol compound. Methylation of the hydroxy group at position 16 is performed by the methyltransferase bsc6. 16-O-methylation is followed by oxidation at the C-13 position to ketone and an alkyl shift of the methyl group leads to brassicicene C. Although the probable acetyltransferase bsc4 is included in the gene cluster, no acetylation reactions are necessary for brassicicene C biosynthesis. However, the fact that brassicicene E, which is a structurally related compound having an acetoxy group at position 12, was previously isolated from another strain of A.brassicicola suggests that the ATCC 96836 strain might also produce a small amount of brassicicene E. In Alternaria brassicicola (Dark leaf spot agent), this protein is Fusicoccadiene 8-ol C-16 hydroxylase.